Here is a 260-residue protein sequence, read N- to C-terminus: Nuclear shuttle protein (260 aa).

The disordered stretch occupies residues 1-29; sequence MRRGAYTPRSTPFPRDRRSYNAGKGRSFR. The Bipartite nuclear localization signal signature appears at 21–42; the sequence is NAGKGRSFRSYRRRGPVRPLAR. Positions 84-100 match the Nuclear localization signal motif; sequence VKTRALSDNRVGDYIKL. The tract at residues 154-191 is interaction with Arabidopsis thaliana NSI protein; sequence QLFGSINASYADLSIQDPYKDRFTVIRQVSYPVNTEKG.

It belongs to the begomovirus nuclear shuttle protein family. In terms of assembly, binds to single-stranded and double-stranded viral DNA. Interacts with the host nuclear shuttle interacting (NSI) protein. This interaction may allow NSP to recruit NSI monomers to the viral genome and thus regulate nuclear export of viral genome by NSP.

The protein localises to the host nucleus. The protein resides in the host cytoplasm. It localises to the host cell membrane. In terms of biological role, binds to the genomic viral ssDNA, shuttles it into and out of the cell nucleus. Begomoviruses use 2 proteins to transport their DNA from cell to cell. The nuclear shuttle protein (NSP) shuttles it between nucleus and cytoplasm and the movement protein (MP) probably transports the DNA-NSP complex to the cell periphery and facilitates movement across the cell wall. This is Nuclear shuttle protein from Indian cassava mosaic virus (ICMV).